Consider the following 388-residue polypeptide: MAVTPISLTPGVLAEALVDLGAIEHNVRLLCEQARGAQVMAVVKADGYGHGAVQTARAALAAGAAELGVATVDEALALRAAGISAPVLAWLHPPGIDFRPALLAGVQIGLSSQRQLDELLTAVRDTGRTATVTVKVDTGLNRNGVPPAQYPSMLTALRRAVAEQAIVPRGLMSHMVYADQPANPVNDVQAQRFTDMLAQAREQGVRFEVAHLSNSSATMSRPDLAFDMVRPGIAVYGLSPVPELGDMGLVPAMTVKCTVALVKSIRAGESVSYGHTWTAQRDTNLALLPVGYADGIFRSLGGRLQVSINGRRRPGVGRICMDQFVVDLGPGRPDVAEGDEAILFGPGSNGEPTAQDWADLLGTIHYEVVTSPRGRITRTYREAHTVES.

Lys44 (proton acceptor; specific for D-alanine) is an active-site residue. The residue at position 44 (Lys44) is an N6-(pyridoxal phosphate)lysine. Residue Arg142 coordinates substrate. Tyr273 (proton acceptor; specific for L-alanine) is an active-site residue. Met321 is a binding site for substrate.

This sequence belongs to the alanine racemase family. It depends on pyridoxal 5'-phosphate as a cofactor.

The catalysed reaction is L-alanine = D-alanine. It functions in the pathway amino-acid biosynthesis; D-alanine biosynthesis; D-alanine from L-alanine: step 1/1. Functionally, catalyzes the interconversion of L-alanine and D-alanine. May also act on other amino acids. The chain is Alanine racemase (alr) from Mycobacterium avium (strain 104).